We begin with the raw amino-acid sequence, 213 residues long: Probable glutathione S-transferase DHAR1, cytosolic (213 aa).

2 residues coordinate glutathione: Lys8 and Asp19. L-ascorbate is bound by residues Lys8 and Asp19. The GST N-terminal domain maps to 10-89 (AVGHPDTLGD…VIEEKYPTPS (80 aa)). Cys20 serves as the catalytic Nucleophile. Residues Lys47, Val60, Ser74, His160, and Trp207 each contribute to the glutathione site. The region spanning 73-213 (DSDVITQVIE…IAGWAPKVNA (141 aa)) is the GST C-terminal domain. An L-ascorbate-binding site is contributed by Lys210.

Belongs to the GST superfamily. DHAR family. Monomer.

It localises to the cytoplasm. The protein localises to the cytosol. The enzyme catalyses RX + glutathione = an S-substituted glutathione + a halide anion + H(+). It catalyses the reaction L-dehydroascorbate + 2 glutathione = glutathione disulfide + L-ascorbate. In terms of biological role, involved in ascorbate homeostasis. Maintains redox pools of ascorbate by recycling dihydroascorbate (DHA) to ascorbate. Involved in scavenging reactive oxygen species (ROS) under oxidative stresses. Possesses dehydroascorbate reductase (DHAR) activity in vitro. May function via a ping-pong reaction mechanism with an electron transfer at the active site. Possesses chaperone-like activity in vitro. This Oryza sativa subsp. japonica (Rice) protein is Probable glutathione S-transferase DHAR1, cytosolic.